Reading from the N-terminus, the 100-residue chain is Large ribosomal subunit protein eL30 (100 aa).

Belongs to the eukaryotic ribosomal protein eL30 family.

The sequence is that of Large ribosomal subunit protein eL30 from Thermococcus sibiricus (strain DSM 12597 / MM 739).